The sequence spans 316 residues: Bifunctional peptidase and (3S)-lysyl hydroxylase JMJD7 (316 aa).

Positions 128-307 (VQKQCSNLPS…LKYSYFQLLD (180 aa)) constitute a JmjC domain. Positions 178, 180, and 277 each coordinate Fe cation.

Homodimer; disulfide-linked. Interacts with DRG1 and DRG2. Fe(2+) is required as a cofactor.

The protein resides in the nucleus. It is found in the cytoplasm. The enzyme catalyses L-lysyl-[protein] + 2-oxoglutarate + O2 = (3S)-3-hydroxy-L-lysyl-[protein] + succinate + CO2. In terms of biological role, bifunctional enzyme that acts both as an endopeptidase and 2-oxoglutarate-dependent monooxygenase. Endopeptidase that cleaves histones N-terminal tails at the carboxyl side of methylated arginine or lysine residues, to generate 'tailless nucleosomes', which may trigger transcription elongation. Preferentially recognizes and cleaves monomethylated and dimethylated arginine residues of histones H2, H3 and H4. After initial cleavage, continues to digest histones tails via its aminopeptidase activity. Additionally, may play a role in protein biosynthesis by modifying the translation machinery. Acts as a Fe(2+) and 2-oxoglutarate-dependent monooxygenase, catalyzing (S)-stereospecific hydroxylation at C-3 of 'Lys-22' of DRG1 and 'Lys-21' of DRG2 translation factors (TRAFAC), promoting their interaction with ribonucleic acids (RNA). This Homo sapiens (Human) protein is Bifunctional peptidase and (3S)-lysyl hydroxylase JMJD7.